We begin with the raw amino-acid sequence, 655 residues long: Hepatocyte growth factor activator serine protease (655 aa).

An N-terminal signal peptide occupies residues 1–35 (MGRWAWVPSPWPPPGLGPFLLLLLLLLLLPRGFQP). A propeptide spans 36 to 372 (QPGGNRTESP…RLEACESLTR (337 aa)) (removed in mature form). N-linked (GlcNAc...) asparagine glycosylation is found at asparagine 40 and asparagine 48. The tract at residues 64-102 (TSETPATSAPEAEGPQSGGLPPPPRAVPSSSSPQAQALT) is disordered. The region spanning 103–150 (EDGRPCRFPFRYGGRMLHACTSEGSAHRKWCATTHNYDRDRAWGYCVE) is the Fibronectin type-II domain. 19 cysteine pairs are disulfide-bonded: cysteine 108-cysteine 133, cysteine 122-cysteine 148, cysteine 164-cysteine 175, cysteine 169-cysteine 186, cysteine 188-cysteine 197, cysteine 202-cysteine 230, cysteine 228-cysteine 237, cysteine 245-cysteine 256, cysteine 250-cysteine 267, cysteine 269-cysteine 278, cysteine 286-cysteine 367, cysteine 307-cysteine 349, cysteine 338-cysteine 362, cysteine 394-cysteine 521, cysteine 432-cysteine 448, cysteine 440-cysteine 510, cysteine 535-cysteine 604, cysteine 567-cysteine 583, and cysteine 594-cysteine 622. The EGF-like 1 domain occupies 160-198 (ALDPCASGPCLNGGSCSNTQDPQSYHCSCPRAFTGKDCG). Residues 200-240 (EKCFDETRYEYLEGGDRWARVRQGHVEQCECFGGRTWCEGT) enclose the Fibronectin type-I domain. The EGF-like 2 domain occupies 241–279 (RHTACLSSPCLNGGTCHLIVATGTTVCACPPGFAGRLCN). The region spanning 286–367 (CFLGNGTGYR…SWEYCRLEAC (82 aa)) is the Kringle domain. The N-linked (GlcNAc...) asparagine glycan is linked to asparagine 290. A Peptidase S1 domain is found at 408 to 646 (IIGGSSSLPG…YVDWINDRIR (239 aa)). Catalysis depends on histidine 447, which acts as the Charge relay system. 2 N-linked (GlcNAc...) asparagine glycosylation sites follow: asparagine 468 and asparagine 492. Aspartate 497 (charge relay system) is an active-site residue. A glycan (N-linked (GlcNAc...) asparagine) is linked at asparagine 546. Serine 598 functions as the Charge relay system in the catalytic mechanism.

This sequence belongs to the peptidase S1 family. As to quaternary structure, heterodimer of a short chain and a long chain linked by a disulfide bond. Post-translationally, the active form of HGFAC presents in the serum is derived from the COOH-terminal region of the precursor by the cleavage of bonds between Arg-372 and Val-373 and Arg-407 and Ile-408. As to expression, liver.

The protein localises to the secreted. Serine protease that hydrolyzes the inactive zymogen hepatocyte growth factor (HGFsc) to an activated disulfide-linked heterodimer, then initiating hepatocyte growth factor receptor signaling pathway. This is Hepatocyte growth factor activator serine protease from Homo sapiens (Human).